A 382-amino-acid chain; its full sequence is Lipid-A-disaccharide synthase (382 aa).

Belongs to the LpxB family.

The enzyme catalyses 2-N,3-O-bis[(3R)-3-hydroxytetradecanoyl]-alpha-D-glucosaminyl 1-phosphate + UDP-2-N,3-O-bis[(3R)-3-hydroxytetradecanoyl]-alpha-D-glucosamine = lipid A disaccharide (E. coli) + UDP + H(+). The catalysed reaction is a lipid X + a UDP-2-N,3-O-bis[(3R)-3-hydroxyacyl]-alpha-D-glucosamine = a lipid A disaccharide + UDP + H(+). It participates in glycolipid biosynthesis; lipid IV(A) biosynthesis; lipid IV(A) from (3R)-3-hydroxytetradecanoyl-[acyl-carrier-protein] and UDP-N-acetyl-alpha-D-glucosamine: step 5/6. Its function is as follows. Condensation of UDP-2,3-diacylglucosamine and 2,3-diacylglucosamine-1-phosphate to form lipid A disaccharide, a precursor of lipid A, a phosphorylated glycolipid that anchors the lipopolysaccharide to the outer membrane of the cell. The sequence is that of Lipid-A-disaccharide synthase from Escherichia coli O157:H7.